The sequence spans 396 residues: Phosphoglycerate kinase (396 aa).

Substrate-binding positions include 23 to 25, Arg38, 61 to 64, Arg122, and Arg155; these read DFN and HMGK. Residues Lys206, Gly296, Glu327, and 353 to 356 contribute to the ATP site; that span reads GGDS.

It belongs to the phosphoglycerate kinase family. Monomer.

Its subcellular location is the cytoplasm. The catalysed reaction is (2R)-3-phosphoglycerate + ATP = (2R)-3-phospho-glyceroyl phosphate + ADP. Its pathway is carbohydrate degradation; glycolysis; pyruvate from D-glyceraldehyde 3-phosphate: step 2/5. In Clostridium botulinum (strain Alaska E43 / Type E3), this protein is Phosphoglycerate kinase.